A 452-amino-acid polypeptide reads, in one-letter code: Heat shock protein 83 (452 aa).

ATP is bound at residue Arg-124. A TPR repeat-binding motif is present at residues 448–452 (MEQVD).

Belongs to the heat shock protein 90 family. In terms of assembly, homodimer.

It localises to the cytoplasm. Its function is as follows. Molecular chaperone that promotes the maturation, structural maintenance and proper regulation of specific target proteins involved for instance in cell cycle control and signal transduction. Undergoes a functional cycle that is linked to its ATPase activity. This cycle probably induces conformational changes in the client proteins, thereby causing their activation. Interacts dynamically with various co-chaperones that modulate its substrate recognition, ATPase cycle and chaperone function. The chain is Heat shock protein 83 (HSP83) from Leishmania donovani.